A 53-amino-acid chain; its full sequence is Large ribosomal subunit protein bL32c (53 aa).

Residues M1–I21 are disordered.

Belongs to the bacterial ribosomal protein bL32 family.

The protein resides in the plastid. It is found in the chloroplast. This is Large ribosomal subunit protein bL32c (rpl32) from Cyanidium caldarium (Red alga).